We begin with the raw amino-acid sequence, 583 residues long: 2-succinyl-5-enolpyruvyl-6-hydroxy-3-cyclohexene-1-carboxylate synthase (583 aa).

The protein belongs to the TPP enzyme family. MenD subfamily. In terms of assembly, homodimer. Mg(2+) serves as cofactor. It depends on Mn(2+) as a cofactor. Requires thiamine diphosphate as cofactor.

It carries out the reaction isochorismate + 2-oxoglutarate + H(+) = 5-enolpyruvoyl-6-hydroxy-2-succinyl-cyclohex-3-ene-1-carboxylate + CO2. Its pathway is quinol/quinone metabolism; 1,4-dihydroxy-2-naphthoate biosynthesis; 1,4-dihydroxy-2-naphthoate from chorismate: step 2/7. The protein operates within quinol/quinone metabolism; menaquinone biosynthesis. In terms of biological role, catalyzes the thiamine diphosphate-dependent decarboxylation of 2-oxoglutarate and the subsequent addition of the resulting succinic semialdehyde-thiamine pyrophosphate anion to isochorismate to yield 2-succinyl-5-enolpyruvyl-6-hydroxy-3-cyclohexene-1-carboxylate (SEPHCHC). The chain is 2-succinyl-5-enolpyruvyl-6-hydroxy-3-cyclohexene-1-carboxylate synthase from Chlorobium phaeovibrioides (strain DSM 265 / 1930) (Prosthecochloris vibrioformis (strain DSM 265)).